The chain runs to 273 residues: Dermonecrotic toxin LdSicTox-alphaIB1aiv (273 aa).

Residue His-5 is part of the active site. Mg(2+) contacts are provided by Glu-25 and Asp-27. The active-site Nucleophile is His-41. Cystine bridges form between Cys-45–Cys-51 and Cys-47–Cys-190. Residue Asp-85 participates in Mg(2+) binding. Asn-250 carries N-linked (GlcNAc...) asparagine glycosylation.

It belongs to the arthropod phospholipase D family. Class II subfamily. Mg(2+) is required as a cofactor. In terms of tissue distribution, expressed by the venom gland.

The protein resides in the secreted. It carries out the reaction an N-(acyl)-sphingosylphosphocholine = an N-(acyl)-sphingosyl-1,3-cyclic phosphate + choline. The catalysed reaction is an N-(acyl)-sphingosylphosphoethanolamine = an N-(acyl)-sphingosyl-1,3-cyclic phosphate + ethanolamine. It catalyses the reaction a 1-acyl-sn-glycero-3-phosphocholine = a 1-acyl-sn-glycero-2,3-cyclic phosphate + choline. The enzyme catalyses a 1-acyl-sn-glycero-3-phosphoethanolamine = a 1-acyl-sn-glycero-2,3-cyclic phosphate + ethanolamine. Functionally, dermonecrotic toxins cleave the phosphodiester linkage between the phosphate and headgroup of certain phospholipids (sphingolipid and lysolipid substrates), forming an alcohol (often choline) and a cyclic phosphate. This toxin acts on sphingomyelin (SM). It may also act on ceramide phosphoethanolamine (CPE), lysophosphatidylcholine (LPC) and lysophosphatidylethanolamine (LPE), but not on lysophosphatidylserine (LPS), and lysophosphatidylglycerol (LPG). It acts by transphosphatidylation, releasing exclusively cyclic phosphate products as second products. Induces dermonecrosis, hemolysis, increased vascular permeability, edema, inflammatory response, and platelet aggregation. This chain is Dermonecrotic toxin LdSicTox-alphaIB1aiv, found in Loxosceles deserta (Desert recluse spider).